The primary structure comprises 257 residues: Aspartate/glutamate leucyltransferase (257 aa).

It belongs to the R-transferase family. Bpt subfamily.

Its subcellular location is the cytoplasm. It catalyses the reaction N-terminal L-glutamyl-[protein] + L-leucyl-tRNA(Leu) = N-terminal L-leucyl-L-glutamyl-[protein] + tRNA(Leu) + H(+). The enzyme catalyses N-terminal L-aspartyl-[protein] + L-leucyl-tRNA(Leu) = N-terminal L-leucyl-L-aspartyl-[protein] + tRNA(Leu) + H(+). In terms of biological role, functions in the N-end rule pathway of protein degradation where it conjugates Leu from its aminoacyl-tRNA to the N-termini of proteins containing an N-terminal aspartate or glutamate. This chain is Aspartate/glutamate leucyltransferase, found in Leptospira interrogans serogroup Icterohaemorrhagiae serovar copenhageni (strain Fiocruz L1-130).